The following is a 134-amino-acid chain: uncharacterized protein (134 aa).

The N-terminal stretch at 1 to 37 is a signal peptide; that stretch reads MSYIKRDHTALRDIAMKTFLKVVGLAASLSAASVAFS.

This is an uncharacterized protein from Coxiella burnetii (strain RSA 493 / Nine Mile phase I).